Reading from the N-terminus, the 197-residue chain is 3-isopropylmalate dehydratase small subunit (197 aa).

Belongs to the LeuD family. LeuD type 1 subfamily. As to quaternary structure, heterodimer of LeuC and LeuD.

It carries out the reaction (2R,3S)-3-isopropylmalate = (2S)-2-isopropylmalate. Its pathway is amino-acid biosynthesis; L-leucine biosynthesis; L-leucine from 3-methyl-2-oxobutanoate: step 2/4. Catalyzes the isomerization between 2-isopropylmalate and 3-isopropylmalate, via the formation of 2-isopropylmaleate. In Corynebacterium glutamicum (strain ATCC 13032 / DSM 20300 / JCM 1318 / BCRC 11384 / CCUG 27702 / LMG 3730 / NBRC 12168 / NCIMB 10025 / NRRL B-2784 / 534), this protein is 3-isopropylmalate dehydratase small subunit.